A 532-amino-acid polypeptide reads, in one-letter code: Protein DA1 (532 aa).

A disordered region spans residues 26 to 71; sequence VYYDNYPTASHDDEPSAADTDADNDEPHHTQEPSTSEDNTSNDQEN. Polar residues predominate over residues 57 to 68; sequence EPSTSEDNTSND. In terms of domain architecture, UIM 1 spans 69–88; it reads QENEDIDRAIALSLLEENQE. Residue lysine 95 forms a Glycyl lysine isopeptide (Lys-Gly) (interchain with G-Cter in ubiquitin) linkage. A UIM 2 domain is found at 101-120; sequence DEDEQLARALQESMVVGNSP. Positions 170–230 constitute an LIM zinc-binding domain; sequence RICAGCNMEI…KACYRERYHP (61 aa). Glycyl lysine isopeptide (Lys-Gly) (interchain with G-Cter in ubiquitin) cross-links involve residues lysine 221, lysine 348, lysine 376, lysine 381, lysine 391, lysine 474, lysine 475, and lysine 519.

In terms of assembly, interacts with ubiquitin. Interacts (via C-terminus) with DA2. Interacts with BB. Interacts with UBP15. Interacts with TCP14 and TCP15. Ubiquitinated at Lys-95, Lys-221, Lys-348, Lys-376, Lys-381, Lys-391, Lys-474, Lys-475 and Lys-519 by the E3 ubiquitin-protein ligases BB and DA2.

Functionally, ubiquitin receptor that limits final seed and organ size by restricting the period of cell proliferation. May act maternally to control seed mass. Acts synergistically with DA2 to regulate seed size. Functions synergistically with DA2 to restrict cell proliferation in the maternal integuments of ovules and developing seeds. Functions antagonistically in a common pathway with UBP15 to regulate seed size. Associates physically with UBP15 and modulates the stability of UBP15, which promote cell proliferation in the integuments of ovules and developing seeds. Functions as a peptidase and cleaves the N-terminal sequence of E3 ubiquitin-protein ligases BB and DA2 in a ubiquitin-dependent manner. Cleaves the deubiquitinating enzyme UBP15, which promotes cell proliferation, and the transcription factors TCP15 and TCP22, which promote cell proliferation and repress endoreduplication. Involved in the promotion of leaf senescence, in addition to its function in restricting plant growth. Acts redundantly with DAR1 and DAR2 to regulate endoreduplication during leaf development. Together with DAR1 and DAR2, modulates the protein stability of the transcription factors TCP14 and TCP15, which repress endoreduplication by directly regulating the expression of cell-cycle genes. This Arabidopsis thaliana (Mouse-ear cress) protein is Protein DA1 (DA1).